Reading from the N-terminus, the 692-residue chain is Phenoloxidase subunit 2 (692 aa).

Positions 1–97 are excised as a propeptide; sequence MTDRVKSLQL…PRHQEMATEV (97 aa). Cu cation-binding residues include His-213, His-217, and His-243. Asn-256, Asn-295, and Asn-309 each carry an N-linked (GlcNAc...) asparagine glycan. The active-site Proton acceptor is the Glu-351. Residues His-366, His-370, and His-406 each contribute to the Cu cation site. N-linked (GlcNAc...) asparagine glycosylation occurs at Asn-494. Cystine bridges form between Cys-583–Cys-628 and Cys-585–Cys-635.

Belongs to the tyrosinase family. Heterodimer. Cu(2+) is required as a cofactor.

It is found in the secreted. It catalyses the reaction L-tyrosine + O2 = L-dopaquinone + H2O. The enzyme catalyses 2 L-dopa + O2 = 2 L-dopaquinone + 2 H2O. Copper-containing oxidase that functions in the formation of pigments such as melanins and other polyphenolic compounds. Catalyzes the rate-limiting conversions of tyrosine to DOPA, DOPA to DOPA-quinone and possibly 5,6 dihydroxyindole to indole-5'6 quinone. Binds to the surface of hemocytes and is involved in hemocyte melanization. Binds the A.niger cell wall component alpha-1,3-glucan, a fungal pathogen-associated molecular pattern (PAMP) that activates the host immune response. The polypeptide is Phenoloxidase subunit 2 (Galleria mellonella (Greater wax moth)).